We begin with the raw amino-acid sequence, 923 residues long: Ubiquitin carboxyl-terminal hydrolase 10 (923 aa).

A DUSP domain is found at 19–134; the sequence is FTPEEEKRIV…GGPPIERKLI (116 aa). The interval 65-91 is disordered; the sequence is NECSTGESSEAPRPGPIDNHDIIESDS. One can recognise a USP domain in the interval 304–895; that stretch reads AGLSNLGNTC…AAYVLFYRRV (592 aa). The Nucleophile role is filled by Cys-313. The active-site Proton acceptor is the His-853.

The protein belongs to the peptidase C19 family.

It carries out the reaction Thiol-dependent hydrolysis of ester, thioester, amide, peptide and isopeptide bonds formed by the C-terminal Gly of ubiquitin (a 76-residue protein attached to proteins as an intracellular targeting signal).. Functionally, recognizes and hydrolyzes the peptide bond at the C-terminal Gly of ubiquitin. Involved in the processing of poly-ubiquitin precursors as well as that of ubiquitinated proteins. This Arabidopsis thaliana (Mouse-ear cress) protein is Ubiquitin carboxyl-terminal hydrolase 10 (UBP10).